The sequence spans 371 residues: Histidinol-phosphate aminotransferase (371 aa).

Lys-229 carries the N6-(pyridoxal phosphate)lysine modification.

The protein belongs to the class-II pyridoxal-phosphate-dependent aminotransferase family. Histidinol-phosphate aminotransferase subfamily. In terms of assembly, homodimer. It depends on pyridoxal 5'-phosphate as a cofactor.

The catalysed reaction is L-histidinol phosphate + 2-oxoglutarate = 3-(imidazol-4-yl)-2-oxopropyl phosphate + L-glutamate. The protein operates within amino-acid biosynthesis; L-histidine biosynthesis; L-histidine from 5-phospho-alpha-D-ribose 1-diphosphate: step 7/9. This chain is Histidinol-phosphate aminotransferase, found in Roseiflexus castenholzii (strain DSM 13941 / HLO8).